Here is a 77-residue protein sequence, read N- to C-terminus: Tautomerase PptA (77 aa).

Proline 2 serves as the catalytic Proton acceptor; via imino nitrogen.

This sequence belongs to the 4-oxalocrotonate tautomerase family. PptA subfamily. In terms of assembly, homodimer.

Its subcellular location is the cytoplasm. The chain is Tautomerase PptA from Escherichia coli (strain K12 / MC4100 / BW2952).